The sequence spans 660 residues: UvrABC system protein B (660 aa).

A Helicase ATP-binding domain is found at 27–414; sequence NGVNEGKRHQ…TDEMVQQIIR (388 aa). Residue 40 to 47 participates in ATP binding; sequence GATGTGKT. The short motif at 93 to 116 is the Beta-hairpin element; the sequence is YYDYYQPEAYVPSTDTFIEKDASI. The Helicase C-terminal domain occupies 431 to 593; sequence QIDDLLGEIQ…ITPTTINKKI (163 aa). Residues 603-622 form a disordered region; that stretch reads NDETNEQQQTEVPKKMTKKE. The 36-residue stretch at 624-659 folds into the UVR domain; the sequence is EKTIANIEKEMKQAAKDLDFEKATELRDMLFELKAE.

Belongs to the UvrB family. In terms of assembly, forms a heterotetramer with UvrA during the search for lesions. Interacts with UvrC in an incision complex.

It is found in the cytoplasm. In terms of biological role, the UvrABC repair system catalyzes the recognition and processing of DNA lesions. A damage recognition complex composed of 2 UvrA and 2 UvrB subunits scans DNA for abnormalities. Upon binding of the UvrA(2)B(2) complex to a putative damaged site, the DNA wraps around one UvrB monomer. DNA wrap is dependent on ATP binding by UvrB and probably causes local melting of the DNA helix, facilitating insertion of UvrB beta-hairpin between the DNA strands. Then UvrB probes one DNA strand for the presence of a lesion. If a lesion is found the UvrA subunits dissociate and the UvrB-DNA preincision complex is formed. This complex is subsequently bound by UvrC and the second UvrB is released. If no lesion is found, the DNA wraps around the other UvrB subunit that will check the other stand for damage. The polypeptide is UvrABC system protein B (Staphylococcus saprophyticus subsp. saprophyticus (strain ATCC 15305 / DSM 20229 / NCIMB 8711 / NCTC 7292 / S-41)).